The sequence spans 605 residues: Methyl-CpG-binding domain protein 1 (605 aa).

The MBD domain occupies 1–69; the sequence is MAEDWLDCPA…TLFDFKQGIL (69 aa). The tract at residues 80–123 is disordered; sequence AVASKKRKKPSRPAKTRKRQVGPQSGEVRKEAPRDETKADTDTA. Over residues 83 to 99 the composition is skewed to basic residues; the sequence is SKKRKKPSRPAKTRKRQ. A Nuclear localization signal motif is present at residues 84–88; the sequence is KKRKK. Positions 106 to 120 are enriched in basic and acidic residues; sequence EVRKEAPRDETKADT. A Glycyl lysine isopeptide (Lys-Gly) (interchain with G-Cter in SUMO2) cross-link involves residue Lys-117. 2 consecutive CXXC-type zinc fingers follow at residues 169-216 and 217-263; these read RMFK…RRCL and RIVE…RRCL. Cys-176, Cys-179, Cys-182, Cys-188, Cys-191, Cys-194, Cys-210, Cys-215, Cys-225, Cys-228, Cys-231, Cys-237, Cys-240, Cys-243, Cys-257, and Cys-262 together coordinate Zn(2+). The interval 269 to 308 is disordered; the sequence is RRKGGCDSKMAARRRPGAQPLPPPPPSQSPEPTEPHPRAL. Residue Lys-277 forms a Glycyl lysine isopeptide (Lys-Gly) (interchain with G-Cter in SUMO2) linkage. Residues 287–297 are compositionally biased toward pro residues; that stretch reads QPLPPPPPSQS. The residue at position 297 (Ser-297) is a Phosphoserine. The CXXC-type 3 zinc finger occupies 330–378; the sequence is TNRRQNRKCGACAACLRRMDCGRCDFCCDKPKFGGSNQKRQKCRWRQCL. Zn(2+)-binding residues include Cys-338, Cys-341, Cys-344, Cys-350, Cys-353, Cys-356, Cys-372, and Cys-377. Phosphoserine is present on residues Ser-391 and Ser-399. Positions 391–451 are disordered; sequence SESEDGAGSP…EAGGGFVLPP (61 aa). The segment covering 403–417 has biased composition (basic residues); it reads YRRRKRPSSARRHHL. Residue Lys-422 forms a Glycyl lysine isopeptide (Lys-Gly) (interchain with G-Cter in SUMO2) linkage. Positions 426–439 are enriched in polar residues; that stretch reads ATRTAQPDHTQAPT. A Glycyl lysine isopeptide (Lys-Gly) (interchain with G-Cter in SUMO2) cross-link involves residue Lys-440. Residues Lys-499 and Lys-538 each participate in a glycyl lysine isopeptide (Lys-Gly) (interchain with G-Cter in SUMO2); alternate cross-link. A disordered region spans residues 520-573; that stretch reads VLVPGCPSKAVDPGLPSVKQEPPDPEEDKEENKDDSASKLAPEEEAGGAGTPVI. Residues 529 to 592 form a transcriptional repression domain (TRD) region; it reads AVDPGLPSVK…RFRDTAVWLP (64 aa). A Glycyl lysine isopeptide (Lys-Gly) (interchain with G-Cter in SUMO2) cross-link involves residue Lys-558.

In terms of assembly, interacts with OASL, ATF7IP, ATF7IP2 and BAHD1. Binds CHAF1A and the SUV39H1-CBX5 complex via the MBD domain. Binds MGP via the TRD domain. May be part of the MeCP1 complex. Sumoylated, sumoylation may increase interaction with ATF7IP. In terms of tissue distribution, widely expressed.

The protein resides in the nucleus. The protein localises to the nucleus matrix. It is found in the nucleus speckle. It localises to the chromosome. Functionally, transcriptional repressor that binds CpG islands in promoters where the DNA is methylated at position 5 of cytosine within CpG dinucleotides. Binding is abolished by the presence of 7-mG that is produced by DNA damage by methylmethanesulfonate (MMS). Acts as transcriptional repressor and plays a role in gene silencing by recruiting ATF7IP, which in turn recruits factors such as the histone methyltransferase SETDB1. Probably forms a complex with SETDB1 and ATF7IP that represses transcription and couples DNA methylation and histone 'Lys-9' trimethylation. Isoform 1 and isoform 2 can also repress transcription from unmethylated promoters. The chain is Methyl-CpG-binding domain protein 1 from Homo sapiens (Human).